The following is a 203-amino-acid chain: Ribosomal RNA large subunit methyltransferase E (203 aa).

Residues Gly59, Trp61, Asp79, Asp97, and Asp119 each contribute to the S-adenosyl-L-methionine site. Lys159 serves as the catalytic Proton acceptor.

It belongs to the class I-like SAM-binding methyltransferase superfamily. RNA methyltransferase RlmE family.

It is found in the cytoplasm. The catalysed reaction is uridine(2552) in 23S rRNA + S-adenosyl-L-methionine = 2'-O-methyluridine(2552) in 23S rRNA + S-adenosyl-L-homocysteine + H(+). Its function is as follows. Specifically methylates the uridine in position 2552 of 23S rRNA at the 2'-O position of the ribose in the fully assembled 50S ribosomal subunit. The protein is Ribosomal RNA large subunit methyltransferase E of Desulforapulum autotrophicum (strain ATCC 43914 / DSM 3382 / VKM B-1955 / HRM2) (Desulfobacterium autotrophicum).